The chain runs to 408 residues: Glutathione-independent formaldehyde dehydrogenase (408 aa).

A Zn(2+)-binding site is contributed by Cys61. NAD(+) contacts are provided by Gly62, Ser63, and His66. Zn(2+) contacts are provided by His82, Cys112, Cys115, Cys118, Cys126, and Asp184. Residues Val212, Asp232, Arg237, Val277, His284, Pro311, Leu313, Gly348, and Thr350 each contribute to the NAD(+) site.

Belongs to the zinc-containing alcohol dehydrogenase family. The cofactor is Zn(2+).

It carries out the reaction formaldehyde + NAD(+) + H2O = formate + NADH + 2 H(+). With respect to regulation, activity is not inhibited by EDTA, which is probably not sufficient to displace the bound metal. Functionally, dehydrogenase that catalyzes the NAD(+)-dependent oxidation of formaldehyde. Exhibits lower activity with acetaldehyde (about 10-fold lower than for formaldehyde), but cannot use methanol, ethanol, 1-butanol, glyoxal or formic acid. Is involved in formaldehyde detoxification. This chain is Glutathione-independent formaldehyde dehydrogenase, found in Bacillus subtilis (strain 168).